We begin with the raw amino-acid sequence, 141 residues long: Nucleoside diphosphate kinase (141 aa).

Residues Lys-11, Phe-59, Arg-87, Thr-93, Arg-104, and Asn-114 each coordinate ATP. The active-site Pros-phosphohistidine intermediate is the His-117.

It belongs to the NDK family. As to quaternary structure, homotetramer. Mg(2+) is required as a cofactor.

It localises to the cytoplasm. The enzyme catalyses a 2'-deoxyribonucleoside 5'-diphosphate + ATP = a 2'-deoxyribonucleoside 5'-triphosphate + ADP. It carries out the reaction a ribonucleoside 5'-diphosphate + ATP = a ribonucleoside 5'-triphosphate + ADP. Its function is as follows. Major role in the synthesis of nucleoside triphosphates other than ATP. The ATP gamma phosphate is transferred to the NDP beta phosphate via a ping-pong mechanism, using a phosphorylated active-site intermediate. The sequence is that of Nucleoside diphosphate kinase from Polynucleobacter asymbioticus (strain DSM 18221 / CIP 109841 / QLW-P1DMWA-1) (Polynucleobacter necessarius subsp. asymbioticus).